The chain runs to 126 residues: Protein ApaG (126 aa).

Positions 2 to 126 constitute an ApaG domain; that stretch reads SDPRYQIDVS…FRLAVPGALH (125 aa).

The polypeptide is Protein ApaG (Pseudomonas fluorescens (strain SBW25)).